We begin with the raw amino-acid sequence, 115 residues long: U31-theraphotoxin-Cg1b (115 aa).

Positions 1–18 are cleaved as a signal peptide; sequence MKLCVIIIASLMVASVSG. Residues 19 to 51 constitute a propeptide that is removed on maturation; it reads RLRKIKGTELDKKMLLEKLGHGMDIRFEETPRE. 4 disulfides stabilise this stretch: Cys52–Cys67, Cys60–Cys73, Cys64–Cys113, and Cys66–Cys86.

Belongs to the neurotoxin 03 (Tx2) family. 02 subfamily. As to expression, expressed by the venom gland.

Its subcellular location is the secreted. Its function is as follows. Probable ion channel inhibitor. This Chilobrachys guangxiensis (Chinese earth tiger tarantula) protein is U31-theraphotoxin-Cg1b.